The sequence spans 294 residues: Bifunctional protein FolD (294 aa).

NADP(+)-binding positions include 166–168, S191, and I232; that span reads GRS.

The protein belongs to the tetrahydrofolate dehydrogenase/cyclohydrolase family. Homodimer.

The catalysed reaction is (6R)-5,10-methylene-5,6,7,8-tetrahydrofolate + NADP(+) = (6R)-5,10-methenyltetrahydrofolate + NADPH. It carries out the reaction (6R)-5,10-methenyltetrahydrofolate + H2O = (6R)-10-formyltetrahydrofolate + H(+). It functions in the pathway one-carbon metabolism; tetrahydrofolate interconversion. In terms of biological role, catalyzes the oxidation of 5,10-methylenetetrahydrofolate to 5,10-methenyltetrahydrofolate and then the hydrolysis of 5,10-methenyltetrahydrofolate to 10-formyltetrahydrofolate. The protein is Bifunctional protein FolD of Afipia carboxidovorans (strain ATCC 49405 / DSM 1227 / KCTC 32145 / OM5) (Oligotropha carboxidovorans).